A 143-amino-acid polypeptide reads, in one-letter code: uncharacterized protein (143 aa).

The protein localises to the cytoplasm. It localises to the nucleus. This is an uncharacterized protein from Schizosaccharomyces pombe (strain 972 / ATCC 24843) (Fission yeast).